Reading from the N-terminus, the 370-residue chain is Transcription factor E2F2 (370 aa).

Residues 1–73 are disordered; the sequence is MYKRKTASIV…QSQSQPGQQR (73 aa). Positions 15-26 are enriched in low complexity; the sequence is SAAGTTSSAMMM. Residues 31–49 show a composition bias toward polar residues; the sequence is AETSVRSQSYESTPVSMDT. A compositionally biased stretch (low complexity) spans 59-73; sequence SPSNSQSQSQPGQQR. A DNA-binding region spans residues 72-137; that stretch reads QRSVGSLVLL…GRHCSLVRWR (66 aa). The tract at residues 137 to 226 is dimerization; it reads RGGGFNNAKD…VDIKRNHYEL (90 aa).

This sequence belongs to the E2F/DP family. As to quaternary structure, forms a heterodimer with Dp. Interacts with Rbf/Rbf1 and Rbf2. Component of the DREAM complex, which is at least composed of Myb, Caf1-55, mip40, mip120, mip130, E2f2, Dp, Rbf, Rbf2, lin-52, HDAC1/Rpd3 and l(3)mbt. As to expression, ubiquitously expressed in eye disk.

Its subcellular location is the nucleus. In terms of biological role, transcriptional repressor that binds to E2f sites and represses E2f-regulated target genes. Binding to E2f sites requires transcription factor Dp. Acts synergistically with Rbf2 to antagonize E2f1-mediated transcriptional activation. Component of the DREAM complex, a multiprotein complex that can both act as a transcription activator or repressor depending on the context. The DREAM complex is required for recruiting E2f2 at differentiation-specific promoters and for stabilizing E2f2-Rbf complexes during S phase. During development, the complex represses transcription of developmentally controlled E2f target genes. During oogenesis, plays a role in restricting DNA synthesis to sites of chorion gene amplification in late stage ovarian follicle cells. Plays an inhibitory role in ionizing radiation (IR)-induced p53-independent apoptosis. May be involved in cell cycle exit by temporarily limiting CycE-dependent activation of E2f-regulated transcription. In Drosophila melanogaster (Fruit fly), this protein is Transcription factor E2F2 (E2f2).